The sequence spans 374 residues: Translocating chain-associated membrane protein 1 (374 aa).

Over 2-29 (AIRKKSTKSPPVLSHEFILQNHADIVSC) the chain is Cytoplasmic. The chain crosses the membrane as a helical span at residues 30-50 (VAMVFLLGLMFEITAKASIIF). The Lumenal portion of the chain corresponds to 51 to 76 (VTLQYNVTLPATEEQATESTSLYYYG). N56 is a glycosylation site (N-linked (GlcNAc...) asparagine). The chain crosses the membrane as a helical span at residues 77–97 (IKDLATVFFYMLVAIIIHAII). The Cytoplasmic portion of the chain corresponds to 98–121 (QEYVLDKINRRMHFSKTKHSKFNE). The 210-residue stretch at 117–326 (SKFNESGQLS…NFQLRRWREH (210 aa)) folds into the TLC domain. Residues 122–142 (SGQLSAFYLFSCIWGTFILIS) form a helical membrane-spanning segment. The Lumenal segment spans residues 143–159 (ENYISDPTILWRAYPHN). The helical transmembrane segment at 160 to 180 (LMTFQMKFFYIAQLAYWFHAF) threads the bilayer. At 181-192 (PELYFQKTKKED) the chain is on the cytoplasmic side. The chain crosses the membrane as a helical span at residues 193–213 (IPRQLVYIGLYLFHIAGAYLL). The Lumenal segment spans residues 214-217 (NLNH). Residues 218-238 (LGLVLLVLHYFVEFLFHISRL) form a helical membrane-spanning segment. Residues 239–251 (FYFSDEKYQKGFS) lie on the Cytoplasmic side of the membrane. Residues 252 to 272 (LWAVLFVLGRLLTLILSVLTV) form a helical membrane-spanning segment. The Lumenal portion of the chain corresponds to 273–297 (GFGLARAENQKLDFSAGNFNVLAVR). A helical membrane pass occupies residues 298–318 (IAVLASICITQAFMMWKFINF). Residues 319–374 (QLRRWREHSTFQAPVVKKKPTVTKGRSSRKGTENGVNGTVTSNGADSPRNRKEKSS) lie on the Cytoplasmic side of the membrane. Positions 334–347 (VKKKPTVTKGRSSR) are enriched in basic residues. The tract at residues 334–374 (VKKKPTVTKGRSSRKGTENGVNGTVTSNGADSPRNRKEKSS) is disordered. Positions 352–363 (NGVNGTVTSNGA) are enriched in polar residues. S365 is modified (phosphoserine).

Belongs to the TRAM family. In terms of assembly, interacts with SEC61B. May interact with Derlin-1/DERL1. N-glycosylated.

Its subcellular location is the endoplasmic reticulum membrane. Functionally, involved in the translocation of nascent protein chains into or through the endoplasmic reticulum (ER) membrane by facilitating the proper chain positioning at the SEC61 channel. Regulates the exposure of nascent secretory protein chain to the cytosol during translocation into the ER. May affect the phospholipid bilayer in the vicinity of the lateral gate of the SEC61 channel, thereby facilitating ER protein transport. Intimately associates with transmembrane (TM) domain of nascent membrane proteins during the entire integration process into the ER membrane. Associates with the second TM domain of G-protein-coupled receptor opsin/OPSD nascent chain in the ER membrane, which may facilitate its integration into the membrane. Under conditions of ER stress, participates in the disposal of misfolded ER membrane proteins during the unfolded protein response (UPR), an integrated stress response (ISR) pathway, by selectively retrotranslocating misfolded ER-membrane proteins from the ER into the cytosol where they are ubiquitinated and degraded by the proteasome. In Canis lupus familiaris (Dog), this protein is Translocating chain-associated membrane protein 1 (TRAM1).